Reading from the N-terminus, the 386-residue chain is Bifunctional enzyme IspD/IspF (386 aa).

The interval 1–229 (MIRGERVIGI…RARALLEAPV (229 aa)) is 2-C-methyl-D-erythritol 4-phosphate cytidylyltransferase. A 2-C-methyl-D-erythritol 2,4-cyclodiphosphate synthase region spans residues 230–386 (ATGVGYDTHR…AIALLVRAAG (157 aa)). A divalent metal cation-binding residues include D236 and H238. 4-CDP-2-C-methyl-D-erythritol 2-phosphate contacts are provided by residues 236–238 (DTH) and 261–262 (HS). Residue H269 participates in a divalent metal cation binding. 4-CDP-2-C-methyl-D-erythritol 2-phosphate is bound by residues 283-285 (DLG), 288-292 (FPDTD), 359-362 (TTGE), F366, and R369.

The protein in the N-terminal section; belongs to the IspD/TarI cytidylyltransferase family. IspD subfamily. It in the C-terminal section; belongs to the IspF family. It depends on a divalent metal cation as a cofactor.

It carries out the reaction 2-C-methyl-D-erythritol 4-phosphate + CTP + H(+) = 4-CDP-2-C-methyl-D-erythritol + diphosphate. The enzyme catalyses 4-CDP-2-C-methyl-D-erythritol 2-phosphate = 2-C-methyl-D-erythritol 2,4-cyclic diphosphate + CMP. It functions in the pathway isoprenoid biosynthesis; isopentenyl diphosphate biosynthesis via DXP pathway; isopentenyl diphosphate from 1-deoxy-D-xylulose 5-phosphate: step 2/6. The protein operates within isoprenoid biosynthesis; isopentenyl diphosphate biosynthesis via DXP pathway; isopentenyl diphosphate from 1-deoxy-D-xylulose 5-phosphate: step 4/6. In terms of biological role, bifunctional enzyme that catalyzes the formation of 4-diphosphocytidyl-2-C-methyl-D-erythritol from CTP and 2-C-methyl-D-erythritol 4-phosphate (MEP) (IspD), and catalyzes the conversion of 4-diphosphocytidyl-2-C-methyl-D-erythritol 2-phosphate (CDP-ME2P) to 2-C-methyl-D-erythritol 2,4-cyclodiphosphate (ME-CPP) with a corresponding release of cytidine 5-monophosphate (CMP) (IspF). The polypeptide is Bifunctional enzyme IspD/IspF (Anaeromyxobacter dehalogenans (strain 2CP-C)).